We begin with the raw amino-acid sequence, 359 residues long: Alanine racemase, biosynthetic (359 aa).

Residue K34 is the Proton acceptor; specific for D-alanine of the active site. K34 bears the N6-(pyridoxal phosphate)lysine mark. Position 129 (R129) interacts with substrate. The active-site Proton acceptor; specific for L-alanine is Y255. Residue M303 participates in substrate binding.

It belongs to the alanine racemase family. Requires pyridoxal 5'-phosphate as cofactor.

It catalyses the reaction L-alanine = D-alanine. Its pathway is amino-acid biosynthesis; D-alanine biosynthesis; D-alanine from L-alanine: step 1/1. It functions in the pathway cell wall biogenesis; peptidoglycan biosynthesis. Its function is as follows. Catalyzes the interconversion of L-alanine and D-alanine. Provides the D-alanine required for cell wall biosynthesis. This is Alanine racemase, biosynthetic (alr) from Salmonella typhi.